We begin with the raw amino-acid sequence, 1099 residues long: Carbamoyl phosphate synthase large chain (1099 aa).

Residues 1-402 (MPKRTDLKSV…ALQKALRSLE (402 aa)) are carboxyphosphate synthetic domain. Residues R129, R169, G175, G176, E208, I210, E215, G241, V242, H243, Q285, and E299 each coordinate ATP. The 196-residue stretch at 133 to 328 (KGVVERCGAE…IAKIATKLSL (196 aa)) folds into the ATP-grasp 1 domain. The Mg(2+) site is built by Q285, E299, and N301. 3 residues coordinate Mn(2+): Q285, E299, and N301. Residues 403-546 (QKGSQLDFSH…YHYSSYDEED (144 aa)) form an oligomerization domain region. A carbamoyl phosphate synthetic domain region spans residues 547–950 (EVALHSKPSI…AFAKSQAAAN (404 aa)). An ATP-grasp 2 domain is found at 677–868 (SRVLDEAGLI…MAKAAALIGT (192 aa)). ATP-binding residues include R713, R752, L754, E759, G784, I785, H786, S787, Q827, and E839. Mg(2+) is bound by residues Q827, E839, and N841. Residues Q827, E839, and N841 each coordinate Mn(2+). The MGS-like domain occupies 951 to 1099 (NALPTEGKIF…AENLKALQNG (149 aa)). The interval 951 to 1099 (NALPTEGKIF…AENLKALQNG (149 aa)) is allosteric domain.

The protein belongs to the CarB family. As to quaternary structure, composed of two chains; the small (or glutamine) chain promotes the hydrolysis of glutamine to ammonia, which is used by the large (or ammonia) chain to synthesize carbamoyl phosphate. Tetramer of heterodimers (alpha,beta)4. Mg(2+) is required as a cofactor. It depends on Mn(2+) as a cofactor.

The enzyme catalyses hydrogencarbonate + L-glutamine + 2 ATP + H2O = carbamoyl phosphate + L-glutamate + 2 ADP + phosphate + 2 H(+). It carries out the reaction hydrogencarbonate + NH4(+) + 2 ATP = carbamoyl phosphate + 2 ADP + phosphate + 2 H(+). The protein operates within amino-acid biosynthesis; L-arginine biosynthesis; carbamoyl phosphate from bicarbonate: step 1/1. It participates in pyrimidine metabolism; UMP biosynthesis via de novo pathway; (S)-dihydroorotate from bicarbonate: step 1/3. Its function is as follows. Large subunit of the glutamine-dependent carbamoyl phosphate synthetase (CPSase). CPSase catalyzes the formation of carbamoyl phosphate from the ammonia moiety of glutamine, carbonate, and phosphate donated by ATP, constituting the first step of 2 biosynthetic pathways, one leading to arginine and/or urea and the other to pyrimidine nucleotides. The large subunit (synthetase) binds the substrates ammonia (free or transferred from glutamine from the small subunit), hydrogencarbonate and ATP and carries out an ATP-coupled ligase reaction, activating hydrogencarbonate by forming carboxy phosphate which reacts with ammonia to form carbamoyl phosphate. This is Carbamoyl phosphate synthase large chain from Arthrobacter sp. (strain FB24).